The primary structure comprises 176 residues: Lipoprotein signal peptidase (176 aa).

Helical transmembrane passes span 26-46 (LWLA…IVIV), 57-77 (VTGF…SFLA), 82-102 (WQRW…VWLL), and 111-131 (FCFA…DRVI). Active-site residues include aspartate 137 and aspartate 155. A helical transmembrane segment spans residues 147–167 (HWPAFNVADCAITVGAVLLIV).

It belongs to the peptidase A8 family.

Its subcellular location is the cell inner membrane. It carries out the reaction Release of signal peptides from bacterial membrane prolipoproteins. Hydrolyzes -Xaa-Yaa-Zaa-|-(S,diacylglyceryl)Cys-, in which Xaa is hydrophobic (preferably Leu), and Yaa (Ala or Ser) and Zaa (Gly or Ala) have small, neutral side chains.. Its pathway is protein modification; lipoprotein biosynthesis (signal peptide cleavage). Its function is as follows. This protein specifically catalyzes the removal of signal peptides from prolipoproteins. The chain is Lipoprotein signal peptidase from Cupriavidus taiwanensis (strain DSM 17343 / BCRC 17206 / CCUG 44338 / CIP 107171 / LMG 19424 / R1) (Ralstonia taiwanensis (strain LMG 19424)).